The chain runs to 463 residues: Sodium-coupled neutral amino acid transporter 7 (463 aa).

The residue at position 28 (Ser-28) is a Phosphoserine. 11 consecutive transmembrane segments (helical) span residues 56–76 (AVFI…PAAF), 82–102 (VAAG…GLVI), 130–150 (LCEV…LIII), 179–199 (FTIS…KEIG), 206–226 (FLSV…YIWP), 240–260 (ASWM…QCHV), 283–303 (AAMV…FLTF), 320–340 (VAVA…YPIL), 372–392 (VLQT…IPDI), 396–416 (ISVI…LCLI), and 429–449 (ASWW…AFIF).

This sequence belongs to the amino acid/polyamine transporter 2 family. Interacts with the mTORC1 complex; this interaction mediates the recruitment of mTORC1 to the lysosome and its subsequent activation. In terms of tissue distribution, highly expressed in the brain, including the hippocampus, especially in the granular layer of dentate gyrus cells and the pyramidal cell layer of the hippocampus, amygdala, thalamus, hypothalamus, in the layer of Purkinje cells in the cerebellum and the layers of cortex. Particularly strong expression in neurons of the ventromedial hypothalamus, basolateral amygdala, ventral tegmental area, and locus coeruleus. Not detected in glial cells, including astrocytes. In addition to brain, also expressed in the spinal cord (at protein level).

It localises to the lysosome membrane. The protein localises to the cell projection. It is found in the axon. It carries out the reaction L-glutamine(in) + Na(+)(in) = L-glutamine(out) + Na(+)(out). The catalysed reaction is L-asparagine(in) + Na(+)(in) = L-asparagine(out) + Na(+)(out). Functionally, symporter that selectively cotransports sodium ions and amino acids, such as L-glutamine and L-asparagine from the lysosome into the cytoplasm and may participates in mTORC1 activation. The transport activity requires an acidic lysosomal lumen. In Mus musculus (Mouse), this protein is Sodium-coupled neutral amino acid transporter 7.